A 371-amino-acid chain; its full sequence is Ribosomal RNA small subunit methyltransferase H (371 aa).

S-adenosyl-L-methionine-binding positions include 92–94 (GGH), D111, Y138, D159, and Q166.

Belongs to the methyltransferase superfamily. RsmH family.

The protein resides in the cytoplasm. It carries out the reaction cytidine(1402) in 16S rRNA + S-adenosyl-L-methionine = N(4)-methylcytidine(1402) in 16S rRNA + S-adenosyl-L-homocysteine + H(+). Specifically methylates the N4 position of cytidine in position 1402 (C1402) of 16S rRNA. The polypeptide is Ribosomal RNA small subunit methyltransferase H (Mycolicibacterium gilvum (strain PYR-GCK) (Mycobacterium gilvum (strain PYR-GCK))).